A 45-amino-acid polypeptide reads, in one-letter code: Large ribosomal subunit protein bL34 (45 aa).

This sequence belongs to the bacterial ribosomal protein bL34 family.

The sequence is that of Large ribosomal subunit protein bL34 from Arthrobacter sp. (strain FB24).